The chain runs to 144 residues: Large ribosomal subunit protein uL16 (144 aa).

This sequence belongs to the universal ribosomal protein uL16 family. As to quaternary structure, part of the 50S ribosomal subunit.

Its function is as follows. Binds 23S rRNA and is also seen to make contacts with the A and possibly P site tRNAs. This chain is Large ribosomal subunit protein uL16, found in Bacillus mycoides (strain KBAB4) (Bacillus weihenstephanensis).